A 235-amino-acid chain; its full sequence is Protein mxl-3 (235 aa).

The tract at residues 18 to 49 (EKQFRKRHHSDSSDDDSSSPKSASPSMDDDRR) is disordered. Residues 47–60 (DRRAHHNELERRRR) are basic motif. Positions 47 to 98 (DRRAHHNELERRRRDHIKDHFTILKDAIPLLDGEKSSRALILKRAVEFIHVM) constitute a bHLH domain. The tract at residues 61–98 (DHIKDHFTILKDAIPLLDGEKSSRALILKRAVEFIHVM) is helix-loop-helix motif.

It belongs to the MAX family. In terms of assembly, may form homodimer. Interacts (via N-terminus) with skn-1 isoforms a and c. In terms of tissue distribution, expressed in the intestine and in the AWC sensory neurons.

Its subcellular location is the nucleus. It localises to the cytoplasm. Its function is as follows. Transcription factor which regulates the expression of genes involved in lipid metabolism in response to nutrient availability. Binds to the E-box motif 5'-CACGTG-3'. Under well-fed conditions, binds to the promoter and represses the expression of lipase genes lipl-1, lipl-2, lipl-3 and to a lesser extent lipl-5, thereby preventing lipolysis. In response to a high-glucose diet, promotes fatty acid synthesis, elongation and desaturation by up-regulating transcription factor sbp-1 expression. Under well-fed conditions, acts remotely in the intestine to up-regulate the expression of chemoreceptor srh-234 gene in the ADL sensory neuron, possibly by regulating the insulin signaling pathway. This is Protein mxl-3 from Caenorhabditis elegans.